The chain runs to 168 residues: 3-isopropylmalate dehydratase small subunit (168 aa).

Belongs to the LeuD family. LeuD type 2 subfamily. As to quaternary structure, heterodimer of LeuC and LeuD.

The enzyme catalyses (2R,3S)-3-isopropylmalate = (2S)-2-isopropylmalate. It functions in the pathway amino-acid biosynthesis; L-leucine biosynthesis; L-leucine from 3-methyl-2-oxobutanoate: step 2/4. Catalyzes the isomerization between 2-isopropylmalate and 3-isopropylmalate, via the formation of 2-isopropylmaleate. This chain is 3-isopropylmalate dehydratase small subunit, found in Thermodesulfovibrio yellowstonii (strain ATCC 51303 / DSM 11347 / YP87).